The chain runs to 162 residues: Caveolin-2 (162 aa).

Topologically, residues Met-1–Lys-86 are cytoplasmic. The residue at position 19 (Tyr-19) is a Phosphotyrosine; by SRC. Ser-20 and Ser-23 each carry phosphoserine. The residue at position 27 (Tyr-27) is a Phosphotyrosine; by SRC. At Ser-36 the chain carries Phosphoserine. Positions Phe-87 to Leu-107 form an intramembrane region, helical. Topologically, residues Ser-108–Asp-162 are cytoplasmic.

It belongs to the caveolin family. In terms of assembly, monomer or homodimer. Interacts with CAV1; the interaction forms a stable heterooligomeric complex that is required for targeting to lipid rafts and for caveolae formation. Tyrosine phosphorylated forms do not form heterooligomers with the Tyr-19-phosphorylated form existing as a monomer or dimer, and the Tyr-27-form as a monomer only. Interacts (tyrosine phosphorylated form) with the SH2 domain-containing proteins, RASA1, NCK1 and SRC. Interacts (tyrosine phosphorylated form) with INSR, the interaction (Tyr-27-phosphorylated form) is increased on insulin stimulation. Interacts (Tyr-19 phosphorylated form) with MAPK1 (phosphorylated form); the interaction, promoted by insulin, leads to nuclear location and MAPK1 activation. Interacts with STAT3; the interaction is increased on insulin-induced tyrosine phosphorylation leading to STAT activation. Post-translationally, phosphorylated on serine and tyrosine residues. CAV1 promotes phosphorylation on Ser-23 which then targets the complex to the plasma membrane, lipid rafts and caveolae. Phosphorylation on Ser-36 appears to modulate mitosis in endothelial cells. Phosphorylation on both Tyr-19 and Tyr-27 is required for insulin-induced 'Ser-727' phosphorylation of STAT3 and its activation. Phosphorylation on Tyr-19 is required for insulin-induced phosphorylation of MAPK1 and DNA binding of STAT3. Tyrosine phosphorylation is induced by both EGF and insulin (By. similarity).

It is found in the nucleus. The protein localises to the cytoplasm. Its subcellular location is the golgi apparatus membrane. The protein resides in the cell membrane. It localises to the membrane. It is found in the caveola. Its function is as follows. May act as a scaffolding protein within caveolar membranes. Interacts directly with G-protein alpha subunits and can functionally regulate their activity. Acts as an accessory protein in conjunction with CAV1 in targeting to lipid rafts and driving caveolae formation. The Ser-36 phosphorylated form has a role in modulating mitosis in endothelial cells. Positive regulator of cellular mitogenesis of the MAPK signaling pathway. Required for the insulin-stimulated nuclear translocation and activation of MAPK1 and STAT3, and the subsequent regulation of cell cycle progression. This is Caveolin-2 (CAV2) from Plecturocebus moloch (Dusky titi monkey).